The sequence spans 188 residues: Photosystem I assembly protein Ycf4 (188 aa).

2 helical membrane passes run 26 to 46 (IWWG…GLSS) and 70 to 90 (LLFY…TIIL).

Belongs to the Ycf4 family.

It localises to the cellular thylakoid membrane. Its function is as follows. Seems to be required for the assembly of the photosystem I complex. The sequence is that of Photosystem I assembly protein Ycf4 from Rippkaea orientalis (strain PCC 8801 / RF-1) (Cyanothece sp. (strain PCC 8801)).